The chain runs to 137 residues: Crustacean calcium-binding protein 23 (137 aa).

EF-hand domains follow at residues 27 to 48, 62 to 97, and 100 to 135; these read RDSS…FGLD, EKKA…KVVK, and ATEE…YSGL.

Monomer or disulfide-linked dimers.

Its function is as follows. Possibly acts as a regulatory protein and not as a calcium buffer or transport protein. The chain is Crustacean calcium-binding protein 23 from Homarus americanus (American lobster).